The sequence spans 33 residues: Fatty acid-binding protein, intestinal (33 aa).

It belongs to the calycin superfamily. Fatty-acid binding protein (FABP) family. As to expression, intestine.

It localises to the cytoplasm. FABPs are thought to play a role in the intracellular transport of long-chain fatty acids and their acyl-CoA esters. The protein is Fatty acid-binding protein, intestinal (fabp2) of Rhamdia sapo (South American catfish).